The primary structure comprises 335 residues: MNGAIGGDLLLNFPDMSVLERQRAHLKYLNPTFDSPLAGFFADSSMITGGEMDSYLSTAGLNLPMMYGETTVEGDSRLSISPETTLGTGNFKKRKFDTETKDCNEKKKKMTMNRDDLVEEGEEEKSKITEQNNGSTKSIKKMKHKAKKEENNFSNDSSKVTKELEKTDYIHVRARRGQATDSHSIAERVRREKISERMKFLQDLVPGCDKITGKAGMLDEIINYVQSLQRQIEFLSMKLAIVNPRPDFDMDDIFAKEVASTPMTVVPSPEMVLSGYSHEMVHSGYSSEMVNSGYLHVNPMQQVNTSSDPLSCFNNGEAPSMWDSHVQNLYGNLGV.

A disordered region spans residues 110 to 160 (MTMNRDDLVEEGEEEKSKITEQNNGSTKSIKKMKHKAKKEENNFSNDSSKV). Residues 178 to 228 (QATDSHSIAERVRREKISERMKFLQDLVPGCDKITGKAGMLDEIINYVQSL) form the bHLH domain.

Homodimer. Interacts with IBH1. Binds reversibly to CRY2 after blue light illumination. As to expression, expressed constitutively in roots, leaves, and stems.

The protein localises to the nucleus. Its function is as follows. Transcription factor that binds DNA to G box 5'-CACGTG-3' and, to a lower extent, to E-box 5'-CANNTG-3' in vitro. Binds to chromatin DNA of the FT gene and promotes its expression, and thus triggers flowering in response to blue light. This is Transcription factor bHLH63 (BHLH63) from Arabidopsis thaliana (Mouse-ear cress).